We begin with the raw amino-acid sequence, 145 residues long: Brain and acute leukemia cytoplasmic protein (145 aa).

A lipid anchor (N-myristoyl glycine) is attached at glycine 2. Residue cysteine 3 is the site of S-palmitoyl cysteine attachment. The interaction with CAMK2A stretch occupies residues 3–35 (CGGSRADAIEPRYYESWTRETESTWLTYTDSDA). The interval 36 to 113 (LPSAAATDSG…GLWTTEAKRD (78 aa)) is disordered. The span at 83-106 (CGTQCPNSQSLSSGPLTQKQNGLW) shows a compositional bias: polar residues.

Interacts with CAMK2A. In terms of processing, palmitoylation and myristoylation target the protein to the lipid rafts. In terms of tissue distribution, predominantly expressed in the brain (at protein level). Within the brain, found in most of forebrain structures, including the cerebral cortex, hippocampal formation, olfactory bulb, anterior olfactory nuclei, piriform cortex, tenia tecta and amygdaloid nuclei. Not detected in glial cells.

It localises to the cytoplasm. It is found in the synapse. The protein resides in the synaptosome. Its subcellular location is the membrane raft. The protein localises to the postsynaptic density. Its function is as follows. May play a synaptic role at the postsynaptic lipid rafts possibly through interaction with CAMK2A. This chain is Brain and acute leukemia cytoplasmic protein (Baalc), found in Rattus norvegicus (Rat).